Consider the following 446-residue polypeptide: Histidine--tRNA ligase (446 aa).

Belongs to the class-II aminoacyl-tRNA synthetase family. In terms of assembly, homodimer.

Its subcellular location is the cytoplasm. The catalysed reaction is tRNA(His) + L-histidine + ATP = L-histidyl-tRNA(His) + AMP + diphosphate + H(+). The chain is Histidine--tRNA ligase from Burkholderia ambifaria (strain MC40-6).